The primary structure comprises 390 residues: Chorismate synthase (390 aa).

2 residues coordinate NADP(+): arginine 39 and arginine 45. Residues arginine 132 to serine 134, asparagine 253 to alanine 254, glycine 298, lysine 313 to threonine 317, and arginine 339 each bind FMN.

This sequence belongs to the chorismate synthase family. In terms of assembly, homotetramer. FMNH2 is required as a cofactor.

The catalysed reaction is 5-O-(1-carboxyvinyl)-3-phosphoshikimate = chorismate + phosphate. It participates in metabolic intermediate biosynthesis; chorismate biosynthesis; chorismate from D-erythrose 4-phosphate and phosphoenolpyruvate: step 7/7. Its function is as follows. Catalyzes the anti-1,4-elimination of the C-3 phosphate and the C-6 proR hydrogen from 5-enolpyruvylshikimate-3-phosphate (EPSP) to yield chorismate, which is the branch point compound that serves as the starting substrate for the three terminal pathways of aromatic amino acid biosynthesis. This reaction introduces a second double bond into the aromatic ring system. This chain is Chorismate synthase, found in Shouchella clausii (strain KSM-K16) (Alkalihalobacillus clausii).